A 215-amino-acid polypeptide reads, in one-letter code: 3-demethoxyubiquinol 3-hydroxylase (215 aa).

Fe cation contacts are provided by E64, E94, H97, E146, E178, and H181.

This sequence belongs to the COQ7 family. The cofactor is Fe cation.

It localises to the cell membrane. It catalyses the reaction a 5-methoxy-2-methyl-3-(all-trans-polyprenyl)benzene-1,4-diol + AH2 + O2 = a 3-demethylubiquinol + A + H2O. The protein operates within cofactor biosynthesis; ubiquinone biosynthesis. Its function is as follows. Catalyzes the hydroxylation of 2-nonaprenyl-3-methyl-6-methoxy-1,4-benzoquinol during ubiquinone biosynthesis. This is 3-demethoxyubiquinol 3-hydroxylase from Pseudomonas paraeruginosa (strain DSM 24068 / PA7) (Pseudomonas aeruginosa (strain PA7)).